Reading from the N-terminus, the 500-residue chain is Phenylalanine--tRNA ligase alpha subunit (500 aa).

Residues Thr343, 382 to 384 (QID), and Phe423 each bind L-phenylalanine. Glu425 contacts Mg(2+). Phe448 is a binding site for L-phenylalanine.

This sequence belongs to the class-II aminoacyl-tRNA synthetase family. Phe-tRNA synthetase alpha subunit type 2 subfamily. As to quaternary structure, tetramer of two alpha and two beta subunits. It depends on Mg(2+) as a cofactor.

The protein resides in the cytoplasm. It catalyses the reaction tRNA(Phe) + L-phenylalanine + ATP = L-phenylalanyl-tRNA(Phe) + AMP + diphosphate + H(+). The sequence is that of Phenylalanine--tRNA ligase alpha subunit from Pyrococcus abyssi (strain GE5 / Orsay).